A 548-amino-acid polypeptide reads, in one-letter code: DNA ligase (548 aa).

Glu244 contributes to the ATP binding site. Catalysis depends on Lys246, which acts as the N6-AMP-lysine intermediate. The ATP site is built by Arg251, Arg266, Glu295, Phe334, Arg405, and Lys411.

This sequence belongs to the ATP-dependent DNA ligase family. It depends on Mg(2+) as a cofactor.

The catalysed reaction is ATP + (deoxyribonucleotide)n-3'-hydroxyl + 5'-phospho-(deoxyribonucleotide)m = (deoxyribonucleotide)n+m + AMP + diphosphate.. Its function is as follows. DNA ligase that seals nicks in double-stranded DNA during DNA replication, DNA recombination and DNA repair. This chain is DNA ligase, found in Methanoculleus marisnigri (strain ATCC 35101 / DSM 1498 / JR1).